A 388-amino-acid polypeptide reads, in one-letter code: Leucine aminopeptidase 1 (388 aa).

Residues 1-19 form the signal peptide; it reads MKSLSLLALAAIAPPAAVA. A propeptide spanning residues 20–88 is cleaved from the precursor; it reads AVVDRQVPFE…SAKSHERIQV (69 aa). N180 is a glycosylation site (N-linked (GlcNAc...) asparagine). The Zn(2+) site is built by H188, D207, E246, and D273. The cysteines at positions 322 and 326 are disulfide-linked. Position 355 (H355) interacts with Zn(2+).

Belongs to the peptidase M28 family. M28E subfamily. In terms of assembly, monomer. It depends on Zn(2+) as a cofactor.

It localises to the secreted. In terms of biological role, extracellular aminopeptidase that allows assimilation of proteinaceous substrates. The protein is Leucine aminopeptidase 1 (LAP1) of Coccidioides posadasii (strain C735) (Valley fever fungus).